The chain runs to 861 residues: Valine--tRNA ligase (861 aa).

The short motif at 42-52 (PNITGRIHMGH) is the 'HIGH' region element. Residues 521-525 (KMSKS) carry the 'KMSKS' region motif. Position 524 (Lys524) interacts with ATP. The stretch at 792–861 (VAGLNLQSEI…ILNQILGDLM (70 aa)) forms a coiled coil.

This sequence belongs to the class-I aminoacyl-tRNA synthetase family. ValS type 1 subfamily. Monomer.

It is found in the cytoplasm. It catalyses the reaction tRNA(Val) + L-valine + ATP = L-valyl-tRNA(Val) + AMP + diphosphate. Functionally, catalyzes the attachment of valine to tRNA(Val). As ValRS can inadvertently accommodate and process structurally similar amino acids such as threonine, to avoid such errors, it has a 'posttransfer' editing activity that hydrolyzes mischarged Thr-tRNA(Val) in a tRNA-dependent manner. In Pseudothermotoga lettingae (strain ATCC BAA-301 / DSM 14385 / NBRC 107922 / TMO) (Thermotoga lettingae), this protein is Valine--tRNA ligase.